We begin with the raw amino-acid sequence, 441 residues long: Deoxyguanosinetriphosphate triphosphohydrolase-like protein (441 aa).

The interval methionine 1–arginine 27 is disordered. Residues glutamine 7–arginine 27 show a composition bias toward basic and acidic residues. Residues arginine 59–alanine 252 enclose the HD domain.

Belongs to the dGTPase family. Type 2 subfamily.

This Shewanella oneidensis (strain ATCC 700550 / JCM 31522 / CIP 106686 / LMG 19005 / NCIMB 14063 / MR-1) protein is Deoxyguanosinetriphosphate triphosphohydrolase-like protein.